An 81-amino-acid polypeptide reads, in one-letter code: MLVAYICHVKRLQIYIDEDVDRALAVEARRRRTSKAALIREYVAEHLRQPGPDPVDAFVGSFVGEADLSASVDDVVYGKHE.

Its function is as follows. Antitoxin component of a type II toxin-antitoxin (TA) system. Neutralizes the toxic effect of cognate toxin VapC20. The sequence is that of Antitoxin VapB20 (vapB20) from Mycobacterium tuberculosis (strain CDC 1551 / Oshkosh).